A 372-amino-acid chain; its full sequence is NAD(P)H-quinone oxidoreductase subunit 1 (372 aa).

Transmembrane regions (helical) follow at residues 27–47, 97–117, 130–150, 176–196, 204–224, 254–274, 308–328, and 351–371; these read AIWM…GVLV, WLFL…YLIV, VGIF…LMAG, LALS…IDIV, ILGW…IAAL, FALF…VFAV, SLGI…AILL, and VSLV…FAFG.

The protein belongs to the complex I subunit 1 family. In terms of assembly, NDH-1 is composed of at least 11 different subunits.

The protein localises to the cellular thylakoid membrane. It carries out the reaction a plastoquinone + NADH + (n+1) H(+)(in) = a plastoquinol + NAD(+) + n H(+)(out). It catalyses the reaction a plastoquinone + NADPH + (n+1) H(+)(in) = a plastoquinol + NADP(+) + n H(+)(out). NDH-1 shuttles electrons from an unknown electron donor, via FMN and iron-sulfur (Fe-S) centers, to quinones in the respiratory and/or the photosynthetic chain. The immediate electron acceptor for the enzyme in this species is believed to be plastoquinone. Couples the redox reaction to proton translocation, and thus conserves the redox energy in a proton gradient. The polypeptide is NAD(P)H-quinone oxidoreductase subunit 1 (Microcystis aeruginosa (strain NIES-843 / IAM M-2473)).